The chain runs to 242 residues: UPF0309 protein Oant_1457 (242 aa).

The SIS domain maps to 30–214 (AAELITAAAL…AKLVGKGDAP (185 aa)).

It belongs to the UPF0309 family.

In Brucella anthropi (strain ATCC 49188 / DSM 6882 / CCUG 24695 / JCM 21032 / LMG 3331 / NBRC 15819 / NCTC 12168 / Alc 37) (Ochrobactrum anthropi), this protein is UPF0309 protein Oant_1457.